We begin with the raw amino-acid sequence, 158 residues long: Lipoprotein signal peptidase (158 aa).

Helical transmembrane passes span 4–24, 63–83, and 88–108; these read KYYI…DQVT, KMGF…LFYI, and YNLF…GNFI. Catalysis depends on residues D118 and D136. A helical membrane pass occupies residues 131–151; the sequence is IFNVADSSLTIGVLFIIIALL.

This sequence belongs to the peptidase A8 family.

Its subcellular location is the cell membrane. The enzyme catalyses Release of signal peptides from bacterial membrane prolipoproteins. Hydrolyzes -Xaa-Yaa-Zaa-|-(S,diacylglyceryl)Cys-, in which Xaa is hydrophobic (preferably Leu), and Yaa (Ala or Ser) and Zaa (Gly or Ala) have small, neutral side chains.. The protein operates within protein modification; lipoprotein biosynthesis (signal peptide cleavage). Functionally, this protein specifically catalyzes the removal of signal peptides from prolipoproteins. The protein is Lipoprotein signal peptidase of Staphylococcus haemolyticus (strain JCSC1435).